Here is a 101-residue protein sequence, read N- to C-terminus: NAD(P)H-quinone oxidoreductase subunit 4L, chloroplastic (101 aa).

3 helical membrane-spanning segments follow: residues 2-22 (ILDS…YGLI), 32-52 (MSLE…SNFI), and 64-84 (IFIM…ILAI).

The protein belongs to the complex I subunit 4L family. NDH is composed of at least 16 different subunits, 5 of which are encoded in the nucleus.

It localises to the plastid. It is found in the chloroplast thylakoid membrane. The catalysed reaction is a plastoquinone + NADH + (n+1) H(+)(in) = a plastoquinol + NAD(+) + n H(+)(out). It catalyses the reaction a plastoquinone + NADPH + (n+1) H(+)(in) = a plastoquinol + NADP(+) + n H(+)(out). Functionally, NDH shuttles electrons from NAD(P)H:plastoquinone, via FMN and iron-sulfur (Fe-S) centers, to quinones in the photosynthetic chain and possibly in a chloroplast respiratory chain. The immediate electron acceptor for the enzyme in this species is believed to be plastoquinone. Couples the redox reaction to proton translocation, and thus conserves the redox energy in a proton gradient. The sequence is that of NAD(P)H-quinone oxidoreductase subunit 4L, chloroplastic from Chlorokybus atmophyticus (Soil alga).